Consider the following 1733-residue polypeptide: Protein NETWORKED 1D (1733 aa).

The NAB domain occupies 12–92; it reads YSWWWDSHIS…ERYDHATGVI (81 aa). 4 coiled-coil regions span residues 195-816, 897-931, 960-1043, and 1196-1386; these read KEIN…RESS, LIAE…QIDS, DENS…QKLI, and ARSA…NDLM. A disordered region spans residues 1456–1476; it reads LKTSSARRSRRRNGSLRKQNH. Residues 1460-1470 are compositionally biased toward basic residues; that stretch reads SARRSRRRNGS. 2 coiled-coil regions span residues 1553-1627 and 1653-1686; these read ANKR…KVQN and SEQA…DRED. The interval 1628-1656 is disordered; the sequence is GFERSDGSKSSMDLDENESSRRRRISEQA.

It belongs to the NET family.

Its function is as follows. Plant-specific actin binding protein. May be part of a membrane-cytoskeletal adapter complex. This chain is Protein NETWORKED 1D, found in Arabidopsis thaliana (Mouse-ear cress).